The chain runs to 961 residues: Replication protein 1a (961 aa).

The segment at 48-380 (VRNKLSIEEA…VIINGQAIMA (333 aa)) is methyltransferase. The Alphavirus-like MT domain maps to 71 to 260 (NLTQQYHAPH…HGWQDLGSFF (190 aa)). The membrane association stretch occupies residues 392-409 (VAFALTLNLYQKYEKLTA). The span at 503 to 512 (KTKRSKKKAK) shows a compositional bias: basic residues. Residues 503–541 (KTKRSKKKAKVPPAAEIPQEEFHDAPESSSPESVSDDVK) are disordered. A (+)RNA virus helicase ATP-binding domain is found at 655 to 810 (DKTCACSNLR…NLQYDRRDVV (156 aa)). The tract at residues 682-946 (MVDGVAGCGK…TRHKKSFEYC (265 aa)) is ATP-dependent helicase. An ATP-binding site is contributed by 685 to 692 (GVAGCGKT). Residues 811 to 961 (HKTYRCPQDV…AGDLIFNCVK (151 aa)) enclose the (+)RNA virus helicase C-terminal domain.

This sequence belongs to the bromoviridae replication protein 1a family. Interacts with RNA-directed RNA polymerase 2a.

It is found in the host endoplasmic reticulum membrane. In terms of biological role, involved in the virus replication. Contains a helicase domain and a methyltransferase domain. The methyltransferase domain is probably involved in viral RNA capping. Involved in the formation of ER membrane spherular invaginations in which RNA replication complexes form. In Bromus inermis (Smooth brome grass), this protein is Replication protein 1a.